Consider the following 480-residue polypeptide: Thyroid receptor-interacting protein 6 (480 aa).

Over residues 1 to 12 the composition is skewed to pro residues; sequence MSGPTWLPPKQP. Residues 1–43 are disordered; it reads MSGPTWLPPKQPEPSRLPQGRSLPRGALGPPTAHGATLQPHPR. The residue at position 25 (Arg25) is an Asymmetric dimethylarginine; alternate. Arg25 bears the Omega-N-methylarginine; alternate mark. Position 55 is a phosphotyrosine; by SRC (Tyr55). The tract at residues 57–84 is disordered; the sequence is PPGVPEDRGPTWVGSHGTPQRLQGLPPD. A Phosphoserine modification is found at Ser92. A disordered region spans residues 107–134; that stretch reads LDGGRSHAPRRPDRQAFEAPPPHAYRGG. Residues 108 to 122 show a composition bias toward basic and acidic residues; that stretch reads DGGRSHAPRRPDRQA. Arg111, Arg183, and Arg190 each carry omega-N-methylarginine. At Ser193 the chain carries Phosphoserine. Omega-N-methylarginine occurs at positions 209 and 242. Residues 218–257 form a disordered region; the sequence is RSHREPGPGVPEGPSGVHIPAGGGRGGGHEPQGPLGQPPE. The span at 238 to 247 shows a compositional bias: gly residues; it reads AGGGRGGGHE. 3 consecutive LIM zinc-binding domains span residues 281–339, 341–401, and 404–471; these read GRCG…YVAT, EKCS…KFAP, and SVCG…RIQE. The segment at 473–480 is interaction with MAGI1 and PTPN13; that stretch reads SATVTTDC.

The protein belongs to the zyxin/ajuba family. In terms of assembly, specifically interacts with the ligand binding domain of the thyroid receptor (TR) in the presence of thyroid hormone. Interacts (via the third LIM domain and C-terminus) with PTPN13 (via the second PDZ domain). Interacts (via the second LIM domain or via the third LIM domain plus C-terminus) with PDLIM4 (via PDZ domain). Found in a complex with PTPN13 and PDLIM4. Interacts with SVIL isoform 2. Interacts with LPAR2 but not other LPA receptors. Interacts with PRKAA2. Interacts with MAGI1. Interacts with SCRIB. In case of infection, interacts with S.typhimurium protein sseI. In terms of processing, phosphorylation at Tyr-55 by SRC is required for enhancement of lysophosphatidic acid-induced cell migration. Tyr-55 is dephosphorylated by PTPN13. Highly expressed in kidney, stomach, lung, heart and testis. Low expression levels in brain, colon, thymus, pancreas and skin. Not expressed in skeletal muscle.

It is found in the cytoplasm. The protein localises to the cytoskeleton. Its subcellular location is the cell junction. The protein resides in the focal adhesion. It localises to the nucleus. Its function is as follows. Relays signals from the cell surface to the nucleus to weaken adherens junction and promote actin cytoskeleton reorganization and cell invasiveness. Involved in lysophosphatidic acid-induced cell adhesion and migration. Acts as a transcriptional coactivator for NF-kappa-B and JUN, and mediates the transrepression of these transcription factors induced by glucocorticoid receptor. The protein is Thyroid receptor-interacting protein 6 (Trip6) of Mus musculus (Mouse).